The primary structure comprises 385 residues: Cotranscriptional regulator ARB2A homolog (385 aa).

2 disordered regions span residues 1-65 and 220-239; these read MSDI…NGEE and EEQKEKAKEEEEKKDDNGKL. Residues 52–62 show a composition bias toward low complexity; sequence NNNNNNSNNSN. The segment covering 220–238 has biased composition (basic and acidic residues); sequence EEQKEKAKEEEEKKDDNGK.

This sequence belongs to the ARB2A family.

This Dictyostelium discoideum (Social amoeba) protein is Cotranscriptional regulator ARB2A homolog.